The sequence spans 302 residues: Proteasome subunit beta (302 aa).

Residues 1–10 (MAGRVREVSH) are compositionally biased toward basic and acidic residues. Positions 1–21 (MAGRVREVSHSSDQSGRLPAA) are disordered. Residues 1–67 (MAGRVREVSH…GPGAGEPPHA (67 aa)) constitute a propeptide, removed in mature form; by autocatalysis. T68 functions as the Nucleophile in the catalytic mechanism. The tract at residues 283–302 (RRGNPGGNPGISAVHGDGGN) is disordered.

This sequence belongs to the peptidase T1B family. In terms of assembly, the 20S proteasome core is composed of 14 alpha and 14 beta subunits that assemble into four stacked heptameric rings, resulting in a barrel-shaped structure. The two inner rings, each composed of seven catalytic beta subunits, are sandwiched by two outer rings, each composed of seven alpha subunits. The catalytic chamber with the active sites is on the inside of the barrel. Has a gated structure, the ends of the cylinder being occluded by the N-termini of the alpha-subunits. Is capped by the proteasome-associated ATPase, ARC.

Its subcellular location is the cytoplasm. It carries out the reaction Cleavage of peptide bonds with very broad specificity.. The protein operates within protein degradation; proteasomal Pup-dependent pathway. Its activity is regulated as follows. The formation of the proteasomal ATPase ARC-20S proteasome complex, likely via the docking of the C-termini of ARC into the intersubunit pockets in the alpha-rings, may trigger opening of the gate for substrate entry. Interconversion between the open-gate and close-gate conformations leads to a dynamic regulation of the 20S proteasome proteolysis activity. In terms of biological role, component of the proteasome core, a large protease complex with broad specificity involved in protein degradation. The protein is Proteasome subunit beta of Kineococcus radiotolerans (strain ATCC BAA-149 / DSM 14245 / SRS30216).